We begin with the raw amino-acid sequence, 484 residues long: Phosphomevalonate kinase erg8 (484 aa).

Residues R54 to D77 form a disordered region. Position 184–194 (A184–A194) interacts with ATP.

It belongs to the GHMP kinase family. Mevalonate kinase subfamily.

It catalyses the reaction (R)-5-phosphomevalonate + ATP = (R)-5-diphosphomevalonate + ADP. It functions in the pathway isoprenoid biosynthesis; isopentenyl diphosphate biosynthesis via mevalonate pathway; isopentenyl diphosphate from (R)-mevalonate: step 2/3. In terms of biological role, phosphomevalonate kinase; part of the second module of ergosterol biosynthesis pathway that includes the middle steps of the pathway. Erg8 converts 5-phosphomevalonate to 5-diphosphomevalonate. The second module is carried out in the vacuole and involves the formation of farnesyl diphosphate, which is also an important intermediate in the biosynthesis of ubiquinone, dolichol, heme and prenylated proteins. Activity by the mevalonate kinase erg12 (AFUA_4G07780) first converts mevalonate into 5-phosphomevalonate. 5-phosphomevalonate is then further converted to 5-diphosphomevalonate by the phosphomevalonate kinase erg8 (AFUA_5G10680). The diphosphomevalonate decarboxylase mvd1 (AFUA_4G07130) then produces isopentenyl diphosphate. The isopentenyl-diphosphate delta-isomerase idi1 (AFUA_6G11160) then catalyzes the 1,3-allylic rearrangement of the homoallylic substrate isopentenyl (IPP) to its highly electrophilic allylic isomer, dimethylallyl diphosphate (DMAPP). Finally the farnesyl diphosphate synthase erg20 (AFUA_5G02450) catalyzes the sequential condensation of isopentenyl pyrophosphate with dimethylallyl pyrophosphate, and then with the resultant geranylpyrophosphate to the ultimate product farnesyl pyrophosphate. The polypeptide is Phosphomevalonate kinase erg8 (Aspergillus fumigatus (strain ATCC MYA-4609 / CBS 101355 / FGSC A1100 / Af293) (Neosartorya fumigata)).